A 1032-amino-acid polypeptide reads, in one-letter code: Caspase recruitment domain-containing protein 10 (1032 aa).

Disordered regions lie at residues 1 to 23 (MPGR…SEAE), 253 to 276 (RARG…EPDN), and 481 to 553 (EFPS…MSDI). Residue Ser-18 is modified to Phosphoserine. Residues 23-115 (EEDALWERIE…EHFTLLTGQE (93 aa)) enclose the CARD domain. Positions 138–456 (TEVRRLREAR…LEVQLQRAQG (319 aa)) form a coiled coil. Composition is skewed to basic and acidic residues over residues 261-276 (AEEK…EPDN) and 504-517 (HNSE…KEIN).

CARD10 and BCL10 bind to each other by CARD-CARD interaction. They both participate in a complex with MALT1, where MALT1 binds to BCL10. Interacts with TMEM43; this interaction is essential for EGFR-mediated NF-kappa-B activation. Detected in adult heart, kidney and liver; lower levels in intestine, placenta, muscle and lung. Also found in fetal lung, liver and kidney.

The protein resides in the cytoplasm. Functionally, scaffold protein that plays an important role in mediating the activation of NF-kappa-B via BCL10 or EGFR. The protein is Caspase recruitment domain-containing protein 10 (CARD10) of Homo sapiens (Human).